A 353-amino-acid polypeptide reads, in one-letter code: Cruciform cutting endonuclease 1, mitochondrial (353 aa).

Mg(2+)-binding residues include Asp-293 and Asp-294.

Homodimer. Requires Mg(2+) as cofactor.

It is found in the mitochondrion. The enzyme catalyses Endonucleolytic cleavage at a junction such as a reciprocal single-stranded crossover between two homologous DNA duplexes (Holliday junction).. Capable of resolving Holliday junctions. Specific for 4-way junctions. Seems to be important for the maintenance of mitochondrial DNA. Cleaves fixed junctions at the point of strand exchange. Cleaves after 5'-CT-3' sequence. The sequence is that of Cruciform cutting endonuclease 1, mitochondrial (CCE1) from Saccharomyces cerevisiae (strain ATCC 204508 / S288c) (Baker's yeast).